The sequence spans 520 residues: Protein EARLY FLOWERING 5 (520 aa).

Short sequence motifs (nuclear localization signal) lie at residues 16–23, 52–59, and 71–78; these read YRKQIRKR, IRKLDMSK, and KKRQLEDT. Residues 83–410 are disordered; that stretch reads VKKRKEYDEK…PPSSFQDGQA (328 aa). Basic and acidic residues-rich tracts occupy residues 87–97 and 114–126; these read KEYDEKKKEQG and LTGE…EDSV. Residues 148 to 168 show a composition bias toward low complexity; that stretch reads SSIGLAISSDGASSSSAALSS. Pro residues-rich tracts occupy residues 198 to 207, 216 to 227, and 235 to 253; these read PLPPLPPLPP, SPFPPPPPGPPP, and PPLP…PPPG. Polar residues-rich tracts occupy residues 267 to 281, 300 to 312, and 326 to 343; these read SDFT…NITS, AESN…NANL, and QQHQ…TNFQ. Pro residues-rich tracts occupy residues 346-369 and 378-403; these read VHPP…PPHP and PRPP…PPPS.

In seedlings, mostly expressed in the shoot apical meristem (SAM) and root tip.

The protein resides in the nucleus. In terms of biological role, involved in the regulation of flowering time in both long and short days. The sequence is that of Protein EARLY FLOWERING 5 from Arabidopsis thaliana (Mouse-ear cress).